The sequence spans 530 residues: Glucose-6-phosphate isomerase (530 aa).

The active-site Proton donor is Glu-356. Residues His-387 and Lys-502 contribute to the active site.

It belongs to the GPI family.

It localises to the cytoplasm. The catalysed reaction is alpha-D-glucose 6-phosphate = beta-D-fructose 6-phosphate. The protein operates within carbohydrate biosynthesis; gluconeogenesis. Its pathway is carbohydrate degradation; glycolysis; D-glyceraldehyde 3-phosphate and glycerone phosphate from D-glucose: step 2/4. Catalyzes the reversible isomerization of glucose-6-phosphate to fructose-6-phosphate. This Borreliella afzelii (strain PKo) (Borrelia afzelii) protein is Glucose-6-phosphate isomerase.